The sequence spans 399 residues: Presilphiperfolan-8-beta-ol synthase (399 aa).

Positions 1-60 (MAIPALEPQLHDADTSSNNMSSNSTDSGYDTNSTTPLEKSEKPNTQELKQQQLDPKRPPF) are disordered. A compositionally biased stretch (low complexity) spans 15–27 (TSSNNMSSNSTDS). Over residues 28–37 (GYDTNSTTPL) the composition is skewed to polar residues. Mg(2+)-binding residues include aspartate 141, asparagine 285, and serine 289. The short motif at 141–145 (DDQFD) is the DDXXD motif element. Positions 373 and 374 each coordinate (2E,6E)-farnesyl diphosphate.

The protein belongs to the terpene synthase family. Mg(2+) is required as a cofactor.

The catalysed reaction is (2E,6E)-farnesyl diphosphate + H2O = presilphiperfolan-8beta-ol + diphosphate. The protein operates within secondary metabolite biosynthesis. In terms of biological role, presilphiperfolan-8-beta-ol synthase; part of the gene cluster that mediates the biosynthesis of botrydial. Botrydial is necessary for colonization of plant tissue by the T4 strain. It is a strain-dependent virulence factor since highly aggressive strains like SAS56 or B05 still retain substantial virulence when botrydial synthesis is impaired, since they produce also botcinic acid. The first step of botrydial biosynthesis is performed by the sesquiterpene synthase BOT2 which catalyzes the cyclization of farnesyl diphosphate (FPP) to presilphiperfolan-8-beta-ol (PSP). The cytochrome P450 monooxygenase BOT4 then catalyzes the hydroxylation at C-4 to give a probotryane intermediate. Acetylation of the hydroxyl at C-4 is carried out by the acetyltransferase BOT5, followed by the combined action of the P450 monooxygenases BOT3 and BOT1, to yield finally the glycol, via the regio- and stereospecific hydroxylations at C-10 and C-15 of the probotryane intermediates, respectively. The cleavage of the C10-C15 bond of probotryane skeleton is an intriguing and chemically important reaction, which could be mediated by some of the monooxygenases or by a combination of them. It is possible that either BOT3 or BOT1 would oxidize either the 10- or the 15-hydroxy group to the hydroperoxide derivative, which would then undergo heterolytic fragmentation to give the dialdehyde botrydial. Finally, the dehydrogenase BOT7 might be involved in the conversion of botrydial to dihydrobotrydial. The chain is Presilphiperfolan-8-beta-ol synthase (BOT2) from Botryotinia fuckeliana (Noble rot fungus).